Reading from the N-terminus, the 348-residue chain is Phosphate acyltransferase (348 aa).

The protein belongs to the PlsX family. In terms of assembly, homodimer. Probably interacts with PlsY.

It localises to the cytoplasm. The enzyme catalyses a fatty acyl-[ACP] + phosphate = an acyl phosphate + holo-[ACP]. It participates in lipid metabolism; phospholipid metabolism. Its function is as follows. Catalyzes the reversible formation of acyl-phosphate (acyl-PO(4)) from acyl-[acyl-carrier-protein] (acyl-ACP). This enzyme utilizes acyl-ACP as fatty acyl donor, but not acyl-CoA. This Neisseria gonorrhoeae (strain ATCC 700825 / FA 1090) protein is Phosphate acyltransferase.